We begin with the raw amino-acid sequence, 65 residues long: Gallinacin-12 (65 aa).

Positions 1–19 (MRNLCFVFIFISLLAHGST) are cleaved as a signal peptide. 3 disulfides stabilise this stretch: Cys25–Cys54, Cys32–Cys47, and Cys37–Cys55.

It belongs to the beta-defensin family. As to expression, expressed in the large intestine, kidney liver, gall bladder, testis, ovary and male and female reproductive tracts. Expressed in the ovarian stroma and the theca and granulosa layers of the ovarian follicle.

It localises to the secreted. The protein resides in the cytoplasmic granule. In terms of biological role, has bactericidal activity. The polypeptide is Gallinacin-12 (GAL12) (Gallus gallus (Chicken)).